The primary structure comprises 631 residues: Chaperone protein DnaK (631 aa).

At threonine 198 the chain carries Phosphothreonine; by autocatalysis. The segment at 598-631 (YSAQQGGEQPGAAKKDDVVDAEFTEVDDDKKKSA) is disordered.

The protein belongs to the heat shock protein 70 family.

Its function is as follows. Acts as a chaperone. The protein is Chaperone protein DnaK of Azorhizobium caulinodans (strain ATCC 43989 / DSM 5975 / JCM 20966 / LMG 6465 / NBRC 14845 / NCIMB 13405 / ORS 571).